Reading from the N-terminus, the 540-residue chain is UDP-N-acetylmuramyl-tripeptide synthetase (540 aa).

Residue serine 33 coordinates UDP-N-acetyl-alpha-D-muramoyl-L-alanyl-D-glutamate. An ATP-binding site is contributed by 114-120 (GTEGKSS). Residues 158–159 (TT), serine 185, and arginine 195 contribute to the UDP-N-acetyl-alpha-D-muramoyl-L-alanyl-D-glutamate site. Lysine 227 carries the N6-carboxylysine modification.

Belongs to the MurCDEF family. MurE subfamily. Post-translationally, carboxylation is probably crucial for Mg(2+) binding and, consequently, for the gamma-phosphate positioning of ATP.

It is found in the cytoplasm. The protein operates within cell wall biogenesis; peptidoglycan biosynthesis. Its function is as follows. Catalyzes the addition of an amino acid to the nucleotide precursor UDP-N-acetylmuramoyl-L-alanyl-D-glutamate (UMAG) in the biosynthesis of bacterial cell-wall peptidoglycan. The protein is UDP-N-acetylmuramyl-tripeptide synthetase of Treponema pallidum (strain Nichols).